Here is a 140-residue protein sequence, read N- to C-terminus: MAIERTFSMIKPDATKRNLTGAITKMLEDAGLRVVASKRVWMSRREAEGFYAVHKDRPFFGELVEGMTSGPTVVQVLEGEGAILKNREIMGATNPANAAEGTIRKVHALSIGENSVHGSDAPETAAQEIKYWFSDTEIVG.

6 residues coordinate ATP: Lys11, Phe59, Arg87, Thr93, Arg104, and Asn114. Residue His117 is the Pros-phosphohistidine intermediate of the active site.

The protein belongs to the NDK family. In terms of assembly, homotetramer. Mg(2+) is required as a cofactor.

It is found in the cytoplasm. The enzyme catalyses a 2'-deoxyribonucleoside 5'-diphosphate + ATP = a 2'-deoxyribonucleoside 5'-triphosphate + ADP. It catalyses the reaction a ribonucleoside 5'-diphosphate + ATP = a ribonucleoside 5'-triphosphate + ADP. Its function is as follows. Major role in the synthesis of nucleoside triphosphates other than ATP. The ATP gamma phosphate is transferred to the NDP beta phosphate via a ping-pong mechanism, using a phosphorylated active-site intermediate. The sequence is that of Nucleoside diphosphate kinase from Rhizobium etli (strain ATCC 51251 / DSM 11541 / JCM 21823 / NBRC 15573 / CFN 42).